We begin with the raw amino-acid sequence, 936 residues long: Protocadherin gamma-A10 (936 aa).

The first 32 residues, 1 to 32, serve as a signal peptide directing secretion; it reads MAAQRNRSKESKDCSGLVLLCLFFGIPWEAGA. Cadherin domains follow at residues 33–137, 138–246, 247–351, 352–456, 457–566, and 574–687; these read RQIS…APKF, QAEN…APVF, TLPE…SPEL, TITS…PPTF, SQVS…APEI, and DGST…SPAN. Topologically, residues 33–696 are extracellular; that stretch reads RQISYSIPEE…NSETSDLTLY (664 aa). The N-linked (GlcNAc...) asparagine glycan is linked to N51. 2 N-linked (GlcNAc...) asparagine glycosylation sites follow: N423 and N549. The chain crosses the membrane as a helical span at residues 697-717; sequence LVVAVAAVSCVFLAFVIVLLA. Over 718–936 the chain is Cytoplasmic; that stretch reads HRLRRWHKSR…KKKSGKKEKK (219 aa). Disordered stretches follow at residues 806–845 and 906–936; these read EDTP…WPNN and ATLT…KEKK. Positions 820–845 are enriched in polar residues; the sequence is WRFSQAQRPGTSGSQNGDDTGTWPNN. Over residues 926–936 the composition is skewed to basic residues; it reads NKKKSGKKEKK.

The protein resides in the cell membrane. In terms of biological role, potential calcium-dependent cell-adhesion protein. May be involved in the establishment and maintenance of specific neuronal connections in the brain. The chain is Protocadherin gamma-A10 (PCDHGA10) from Homo sapiens (Human).